Here is a 353-residue protein sequence, read N- to C-terminus: Phosphoribosylformylglycinamidine cyclo-ligase (353 aa).

The protein belongs to the AIR synthase family.

The protein localises to the cytoplasm. The catalysed reaction is 2-formamido-N(1)-(5-O-phospho-beta-D-ribosyl)acetamidine + ATP = 5-amino-1-(5-phospho-beta-D-ribosyl)imidazole + ADP + phosphate + H(+). The protein operates within purine metabolism; IMP biosynthesis via de novo pathway; 5-amino-1-(5-phospho-D-ribosyl)imidazole from N(2)-formyl-N(1)-(5-phospho-D-ribosyl)glycinamide: step 2/2. The chain is Phosphoribosylformylglycinamidine cyclo-ligase from Methylocella silvestris (strain DSM 15510 / CIP 108128 / LMG 27833 / NCIMB 13906 / BL2).